Reading from the N-terminus, the 731-residue chain is Two pore channel protein 2 (731 aa).

The Cytoplasmic portion of the chain corresponds to 1–68; it reads MAAEEQPLLG…RWYYSNVCQR (68 aa). The helical transmembrane segment at 69–89 threads the bilayer; sequence VLGFIIFLILILAFVEVPSSF. Over 90-111 the chain is Extracellular; it reads TKTADVRYRSQPWQPPCGLTET. The chain crosses the membrane as a helical span at residues 112-132; sequence IEAFCLLAFLVDLSVKGYLVG. Residues 133 to 139 lie on the Cytoplasmic side of the membrane; the sequence is QAQLQQN. Residues 140–160 traverse the membrane as a helical segment; the sequence is LWLLAYFMVLVVSVVDWIVSL. The Extracellular portion of the chain corresponds to 161 to 167; it reads SLACEEP. Residues 168–188 traverse the membrane as a helical segment; that stretch reads LRMRRLLRPFFLLQNSSMMKK. The interval 187–191 is interaction with phosphatidylinositol 3,5-bisphosphate; the sequence is KKTLK. The Cytoplasmic portion of the chain corresponds to 189–203; it reads TLKCIRWSLPEMASV. Residues 204-224 form a helical membrane-spanning segment; sequence GLLLAIHLCLFTIIGMLLFTI. Topologically, residues 225-238 are extracellular; sequence GEKDEAQDQERLAY. Residues 239–263 constitute an intramembrane region (helical; Pore-forming); the sequence is FRNLPEALTSLLVLLTTSNNPDVMI. Residues 264-270 are Extracellular-facing; sequence PAYTQNR. Residues 271-291 form a helical membrane-spanning segment; it reads AFALFFIVFTLIGSLFLMNLL. The Cytoplasmic segment spans residues 292 to 417; it reads TAIIYNQFRG…TAQFIFSHHY (126 aa). The chain crosses the membrane as a helical span at residues 418–438; it reads FDYLGNLVALGNLLSICVFLV. Topologically, residues 439–449 are extracellular; it reads LDSDLLPGERD. The chain crosses the membrane as a helical span at residues 450–470; the sequence is DFVLGILDYIFILYYLLELLF. Topologically, residues 471–486 are cytoplasmic; the sequence is KVFALGLPGYLSYHSN. A helical membrane pass occupies residues 487 to 507; it reads VFDGLLTIILLVSEICTLAVY. At 508–524 the chain is on the extracellular side; that stretch reads RLPHSGWKPEQYGPLSL. A helical transmembrane segment spans residues 525-542; sequence WDMTRLMNTLIVFRFLRI. Topologically, residues 543 to 564 are cytoplasmic; it reads IPNIKPMAEVANTILGLIPNLR. A helical transmembrane segment spans residues 565–585; the sequence is AFGGILVVAYYVFAMIGINLF. At 586–618 the chain is on the extracellular side; that stretch reads RGVIVPPGNSSLVPDNNSAVCGSFEQLGYWPNN. N-linked (GlcNAc...) asparagine glycans are attached at residues N594 and N601. Positions 619-641 form an intramembrane region, helical; Pore-forming; the sequence is FDDFAAALITLWNVMVVNNWQVI. Residues 642 to 656 are Extracellular-facing; that stretch reads LEAYKRYAGPWSMVY. The chain crosses the membrane as a helical span at residues 657–677; that stretch reads FVLWWLVSSVIWINLFLALLL. Residues 678 to 731 are Cytoplasmic-facing; the sequence is ENFLHRWDPQGHKQLLVGTKQMSVELMFRDILEEPKEEELMEKLHKHPHLHLCR.

This sequence belongs to the calcium channel alpha-1 subunit (TC 1.A.1.11) family. Two pore calcium channel subfamily. In terms of assembly, homodimer. Interacts with LRRK2. Interacts with HAX1. Interacts with MTOR; the interaction is required for TPCN2 ATP sensitivity. Found in a complex with LSM12, TPCN1 and TPCN2. Interacts with LSM12. Post-translationally, N-glycosylated. Widely expressed. Highly expressed in macrophages. Expressed in pigmented cells.

It is found in the late endosome membrane. It localises to the lysosome membrane. The protein localises to the melanosome membrane. The enzyme catalyses Ca(2+)(in) = Ca(2+)(out). It carries out the reaction Na(+)(in) = Na(+)(out). Its activity is regulated as follows. Regulated by Mg(2+) ions, cytosolic Mg(2+) selectively inhibits outward current while lysosomal Mg(2+) modestly inhibits both the outward and inward currents. In the absence of Mg(2+), NAADP readily activates TPCN2, with properties similar to PI(3,5)P2. Na(+) current is inhibited by ATP in a MTORC-dependent manner. ATP sensitivity is independent of PI(3,5)P2. Both current elicited by PI(3,5)P2 as well as NAADP are inhibited by tetrandrine. Its function is as follows. Intracellular channel initially characterized as a non-selective Ca(2+)-permeable channel activated by NAADP (nicotinic acid adenine dinucleotide phosphate), it is also a highly-selective Na(+) channel activated directly by PI(3,5)P2 (phosphatidylinositol 3,5-bisphosphate). Localizes to the lysosomal and late endosome membranes where it regulates organellar membrane excitability, membrane trafficking, and pH homeostasis. Is associated with a plethora of physiological processes, including mTOR-dependent nutrient sensing, skin pigmentation and autophagy. Ion selectivity is not fixed but rather agonist-dependent and under defined ionic conditions, can be readily activated by both NAADP and PI(3,5)P2. As calcium channel, it increases the pH in the lysosomal lumen, as sodium channel, it promotes lysosomal exocytosis. Plays a crucial role in endolysosomal trafficking in the endolysosomal degradation pathway and is potentially involved in the homeostatic control of many macromolecules and cell metabolites. Also expressed in melanosomes of pigmented cells where mediates a Ca(2+) channel and/or PI(3,5)P2-activated melanosomal Na(+) channel to acidify pH and inhibit tyrosinase activity required for melanogenesis and pigmentation. Unlike the voltage-dependent TPCN1, TPCN2 is voltage independent and can be activated solely by PI(3,5)P2 binding. In contrast, PI(4,5)P2, PI(3,4)P2, PI(3)P and PI(5)P have no obvious effect on channel activation. (Microbial infection) During Ebola virus (EBOV) infection, controls the movement of endosomes containing virus particles and is required by EBOV to escape from the endosomal network into the cell cytoplasm. The polypeptide is Two pore channel protein 2 (Mus musculus (Mouse)).